The sequence spans 452 residues: Agmatine coumaroyltransferase (452 aa).

Residues His163 and Asp396 each act as proton acceptor in the active site.

The protein belongs to the plant acyltransferase family.

It catalyses the reaction 4-coumaroyl-CoA + agmatine = N-(4-guanidinobutyl)-4-hydroxycinnamamide + CoA + H(+). Its function is as follows. Involved in the biosynthesis of hydroxycinnamic acid amides, which play a role in defense against pathogens. Agmatine is the preferred acyl acceptor, lower activity is observed towards putrescine. The preferred acyl donor is p-coumaroyl-CoA, lower activity is seen towards feruloyl-CoA. The sequence is that of Agmatine coumaroyltransferase from Arabidopsis thaliana (Mouse-ear cress).